Consider the following 200-residue polypeptide: Pyrrolidone-carboxylate peptidase (200 aa).

Residues E79, C142, and H166 contribute to the active site.

This sequence belongs to the peptidase C15 family. Homotetramer.

It is found in the cytoplasm. It catalyses the reaction Release of an N-terminal pyroglutamyl group from a polypeptide, the second amino acid generally not being Pro.. Removes 5-oxoproline from various penultimate amino acid residues except L-proline. The polypeptide is Pyrrolidone-carboxylate peptidase (pcp) (Pyrococcus abyssi (strain GE5 / Orsay)).